A 347-amino-acid polypeptide reads, in one-letter code: Epimerase family protein SDR39U1 homolog, chloroplastic (347 aa).

A chloroplast-targeting transit peptide spans 1-37 (MELLCSPTSLSSSFALSSALLVPRSFSMPGTRRFMVL). NADP(+) is bound by residues 54–57 (TGFI), 76–77 (TR), 115–119 (LAGLP), and arginine 136.

As to quaternary structure, can form homodimers. Expressed in leaves, stems and flower buds.

It localises to the plastid. Its subcellular location is the chloroplast inner membrane. The protein resides in the chloroplast. Its function is as follows. Putative NADP-dependent oxidoreductase that acts as a positive regulator of chloroplast division. May play a role at an early stage of the division process. The protein is Epimerase family protein SDR39U1 homolog, chloroplastic of Arabidopsis thaliana (Mouse-ear cress).